Reading from the N-terminus, the 185-residue chain is Ribosomal RNA small subunit methyltransferase G (185 aa).

S-adenosyl-L-methionine contacts are provided by residues G59, F64, I110–Q111, and R127.

It belongs to the methyltransferase superfamily. RNA methyltransferase RsmG family.

It is found in the cytoplasm. The catalysed reaction is guanosine(527) in 16S rRNA + S-adenosyl-L-methionine = N(7)-methylguanosine(527) in 16S rRNA + S-adenosyl-L-homocysteine. In terms of biological role, specifically methylates the N7 position of guanine in position 527 of 16S rRNA. The protein is Ribosomal RNA small subunit methyltransferase G of Helicobacter hepaticus (strain ATCC 51449 / 3B1).